The sequence spans 372 residues: 4-hydroxybenzoate polyprenyltransferase, mitochondrial (372 aa).

A mitochondrion-targeting transit peptide spans 1-42 (MFIWQRKSILLGRSILGSGRVTVAGIIGSSRKRYTSSSSSSS). 7 consecutive transmembrane segments (helical) span residues 92–112 (PVGT…GAMM), 114–134 (GATL…ALVM), 171–191 (ALVF…LLPA), 193–213 (CWWL…FKRF), 229–249 (ALLG…PLYL), 298–318 (IALL…GFIG), and 352–372 (TGLY…FGFL).

The protein belongs to the UbiA prenyltransferase family. Requires Mg(2+) as cofactor.

It localises to the mitochondrion inner membrane. The catalysed reaction is an all-trans-polyprenyl diphosphate + 4-hydroxybenzoate = a 4-hydroxy-3-(all-trans-polyprenyl)benzoate + diphosphate. It functions in the pathway cofactor biosynthesis; ubiquinone biosynthesis. In terms of biological role, catalyzes the prenylation of para-hydroxybenzoate (PHB) with an all-trans polyprenyl group. Mediates the second step in the final reaction sequence of coenzyme Q (CoQ) biosynthesis, which is the condensation of the polyisoprenoid side chain with PHB, generating the first membrane-bound Q intermediate. The chain is 4-hydroxybenzoate polyprenyltransferase, mitochondrial from Saccharomyces cerevisiae (strain ATCC 204508 / S288c) (Baker's yeast).